The primary structure comprises 207 residues: Ribonuclease HII (207 aa).

One can recognise an RNase H type-2 domain in the interval 20-207 (QLFAGVDEVG…KPVKRVLGIE (188 aa)). A divalent metal cation is bound by residues Asp-26, Glu-27, and Asp-118.

Belongs to the RNase HII family. It depends on Mn(2+) as a cofactor. Requires Mg(2+) as cofactor.

It is found in the cytoplasm. The enzyme catalyses Endonucleolytic cleavage to 5'-phosphomonoester.. Its function is as follows. Endonuclease that specifically degrades the RNA of RNA-DNA hybrids. This chain is Ribonuclease HII, found in Aliivibrio fischeri (strain ATCC 700601 / ES114) (Vibrio fischeri).